Reading from the N-terminus, the 232-residue chain is Aquaporin Z 2 (232 aa).

2 helical membrane-spanning segments follow: residues 9 to 29 (FLGTCWLVLGGCGSAVLASAF) and 32 to 52 (VGIGLLGVSFAFGLTVLTMAY). An NPA 1 motif is present at residues 63 to 65 (NPA). 3 consecutive transmembrane segments (helical) span residues 82-102 (VSYVIAQVAGAIIAAAVLYVI), 129-149 (LTAALVTEVVMTFFFLIIILG), and 158-178 (GFAPIAIGLALTLIHLVSIPV). The short motif at 184–186 (NPA) is the NPA 2 element. Residues 200–220 (LSQLWLFWIAPLFGAAIAGIV) traverse the membrane as a helical segment.

It belongs to the MIP/aquaporin (TC 1.A.8) family. In terms of assembly, homotetramer.

Its subcellular location is the cell inner membrane. It catalyses the reaction H2O(in) = H2O(out). Channel that permits osmotically driven movement of water in both directions. It is involved in the osmoregulation and in the maintenance of cell turgor during volume expansion in rapidly growing cells. It mediates rapid entry or exit of water in response to abrupt changes in osmolarity. In Rhizobium meliloti (strain 1021) (Ensifer meliloti), this protein is Aquaporin Z 2.